A 446-amino-acid chain; its full sequence is Sphingomyelinase phosphodiesterase C (446 aa).

Positions 1–26 are cleaved as a signal peptide; that stretch reads MKFRNNLTLYLIFIIVFTIYISLTIS. N6 carries an N-linked (GlcNAc...) asparagine glycan. Positions 39 and 41 each coordinate Zn(2+). C56 and C78 form a disulfide bridge. Zn(2+) is bound at residue D107. N-linked (GlcNAc...) asparagine glycans are attached at residues N118 and N128. N148 contacts Zn(2+). 4 N-linked (GlcNAc...) asparagine glycosylation sites follow: N178, N217, N229, and N234. The Zn(2+) site is built by H247, H287, and H289. N342 and N357 each carry an N-linked (GlcNAc...) asparagine glycan. C429 and C442 are joined by a disulfide.

The protein belongs to the acid sphingomyelinase family. Zn(2+) serves as cofactor.

It localises to the secreted. This is Sphingomyelinase phosphodiesterase C (sgmC) from Dictyostelium discoideum (Social amoeba).